The primary structure comprises 440 residues: Xaa-Pro dipeptidase (440 aa).

Residues aspartate 244, aspartate 255, histidine 336, glutamate 381, and glutamate 420 each contribute to the Mn(2+) site.

Belongs to the peptidase M24B family. Mn(2+) serves as cofactor. Post-translationally, the N-terminus is blocked.

It carries out the reaction Xaa-L-Pro dipeptide + H2O = an L-alpha-amino acid + L-proline. The enzyme catalyses diisopropyl fluorophosphate + H2O = diisopropyl phosphate + fluoride + 2 H(+). Splits dipeptides with a prolyl or hydroxyprolyl residue in the C-terminal position and a nonpolar amino acid at the N-terminal position. Also catalyzes the hydrolysis of toxic organophosphorus cholinesterase-inhibiting compounds including nerve gases such as diisopropylfluorophosphate (DFP), O-isopropyl methylphosphonofluoridate (sarin), O-pinacolyl methylphosphonofluoridate (soman), and O-cyclohexyl methylphosphonofluoridate. The protein is Xaa-Pro dipeptidase (pepQ) of Pseudoalteromonas haloplanktis (Alteromonas haloplanktis).